The primary structure comprises 392 residues: Transcription factor GATA-4 (392 aa).

The segment at 75 to 113 (SSAYNPGTSHPPVSPRFTFSSSPPITAPSSREVSYSSPL) is disordered. The segment covering 91 to 113 (FTFSSSPPITAPSSREVSYSSPL) has biased composition (polar residues). 2 consecutive GATA-type zinc fingers follow at residues 184–208 (CVNC…CNAC) and 238–262 (CANC…CNAC). Disordered regions lie at residues 279–339 (KEGI…HSNS) and 359–392 (MPSL…LVLA). Basic residues predominate over residues 284–293 (TRKRKPKNLS). The span at 302–316 (SGSDSLTPSTSSTNS) shows a compositional bias: low complexity. Polar residues predominate over residues 364 to 380 (LSPQNHHSTFNPSPQAN).

Expressed at high levels in heart, small intestine, stomach, ovary, and liver. Found at much lower levels in lung, spleen, pancreas and skin.

Its subcellular location is the nucleus. Transcriptional activator that binds to the consensus sequence 5'-AGATAG-3'. Associated with cardiac specification and can regulate cardiac-specific transcription during embryogenesis. Activates the expression of cardiac MHC-alpha in vivo. This is Transcription factor GATA-4 (gata4) from Xenopus laevis (African clawed frog).